The primary structure comprises 293 residues: Phycoerythrin class 2 subunit gamma, linker polypeptide (293 aa).

C49 contributes to the phycourobilin binding site. The region spanning 50–229 (AAMGIGIGPR…LGGMKVAISD (180 aa)) is the PBS-linker domain.

Post-translationally, contains one covalently linked phycourobilin chromophore.

The protein localises to the cellular thylakoid membrane. Functionally, this protein is a bile pigment-bearing rod linker polypeptide that associates with C-phycoerythrin. This chain is Phycoerythrin class 2 subunit gamma, linker polypeptide (mpeC), found in Synechococcus sp. (strain WH8020).